An 892-amino-acid chain; its full sequence is DNA ligase (892 aa).

Residues 1–23 (MTMTNRDDSEQLAWDFDAPESDG) form a disordered region. NAD(+)-binding positions include 99–103 (DAAYD), 148–149 (SL), and glutamate 182. Catalysis depends on lysine 184, which acts as the N6-AMP-lysine intermediate. NAD(+) contacts are provided by arginine 205, glutamate 244, lysine 369, and lysine 393. Zn(2+) is bound by residues cysteine 490, cysteine 493, cysteine 509, and cysteine 515. One can recognise a BRCT domain in the interval 810 to 892 (GLPQTLAGKT…KQLLDTGTVE (83 aa)).

This sequence belongs to the NAD-dependent DNA ligase family. LigA subfamily. Requires Mg(2+) as cofactor. It depends on Mn(2+) as a cofactor.

It catalyses the reaction NAD(+) + (deoxyribonucleotide)n-3'-hydroxyl + 5'-phospho-(deoxyribonucleotide)m = (deoxyribonucleotide)n+m + AMP + beta-nicotinamide D-nucleotide.. Functionally, DNA ligase that catalyzes the formation of phosphodiester linkages between 5'-phosphoryl and 3'-hydroxyl groups in double-stranded DNA using NAD as a coenzyme and as the energy source for the reaction. It is essential for DNA replication and repair of damaged DNA. The protein is DNA ligase of Bifidobacterium adolescentis (strain ATCC 15703 / DSM 20083 / NCTC 11814 / E194a).